Consider the following 214-residue polypeptide: Killer cell lectin-like receptor subfamily B member 1 (214 aa).

Topologically, residues 1 to 42 (MDAPVLYAELHLANTQGLRCTSPPSPRQDACWGSGWHRVALK) are cytoplasmic. The helical; Signal-anchor for type II membrane protein transmembrane segment at 43–63 (LGCVGLILLLMGLSVLVGFLV) threads the bilayer. Residues 64–214 (QKPPIEKCSV…WICQKTLKRV (151 aa)) lie on the Extracellular side of the membrane. Residues 98-208 (HWNKCLFISQ…CSSDNHWICQ (111 aa)) enclose the C-type lectin domain. Intrachain disulfides connect Cys119-Cys207 and Cys186-Cys199.

It localises to the membrane. This is Killer cell lectin-like receptor subfamily B member 1 (Klrb1) from Rattus norvegicus (Rat).